We begin with the raw amino-acid sequence, 162 residues long: Small ribosomal subunit protein uS9 (162 aa).

The protein belongs to the universal ribosomal protein uS9 family.

The polypeptide is Small ribosomal subunit protein uS9 (Methylobacterium nodulans (strain LMG 21967 / CNCM I-2342 / ORS 2060)).